The chain runs to 1479 residues: ABC transporter ecdL (1479 aa).

3 consecutive transmembrane segments (helical) span residues 32 to 52, 82 to 102, and 142 to 162; these read LLFE…SVAL, LSNA…WLSF, and IASI…VEAM. Asparagine 183 and asparagine 234 each carry an N-linked (GlcNAc...) asparagine glycan. 2 consecutive transmembrane segments (helical) span residues 251–271 and 291–311; these read WGGF…PFLV and SGLI…TAAF. The 278-residue stretch at 258-535 folds into the ABC transmembrane type-1 1 domain; it reads LCLIGVNYAQ…FVESLMGLRQ (278 aa). Residue asparagine 345 is glycosylated (N-linked (GlcNAc...) asparagine). 2 helical membrane-spanning segments follow: residues 365–382 and 391–411; these read LHET…LWLL and VAAA…SGLL. Asparagine 427 carries an N-linked (GlcNAc...) asparagine glycan. The next 2 membrane-spanning stretches (helical) occupy residues 469-489 and 503-523; these read LLVA…TFAF and PLLA…GQAV. Residues 607–835 enclose the ABC transporter 1 domain; that stretch reads IVLQNHTASW…GSSLRLEELV (229 aa). N-linked (GlcNAc...) asparagine glycosylation is found at asparagine 611 and asparagine 628. 641-648 serves as a coordination point for ATP; that stretch reads GPIGSGKS. N-linked (GlcNAc...) asparagine glycosylation is found at asparagine 793 and asparagine 797. 5 helical membrane passes run 885–905, 955–975, 1028–1048, 1052–1072, and 1135–1155; these read TIGW…VVAL, LFAV…LHLM, ALIG…VIVY, YLAA…MFYL, and IWLT…LVSI. Residues 932 to 1193 enclose the ABC transmembrane type-1 2 domain; it reads IWLKFWTEAN…LVYNWTALEN (262 aa). Asparagine 1161 is a glycosylation site (N-linked (GlcNAc...) asparagine). Residues 1165 to 1185 traverse the membrane as a helical segment; that stretch reads ASIGLALVNLIAFGANMKGLV. Asparagine 1187 is a glycosylation site (N-linked (GlcNAc...) asparagine). In terms of domain architecture, ABC transporter 2 spans 1230–1461; it reads IKFKSVTASY…RSIFASLLRS (232 aa). 1264–1271 is an ATP binding site; sequence GRTGCGKS. Residues 1460–1479 form a disordered region; it reads RSGDEEPGNGHKHESEGEEE. A compositionally biased stretch (basic and acidic residues) spans 1461 to 1479; the sequence is SGDEEPGNGHKHESEGEEE.

This sequence belongs to the ABC transporter superfamily. ABCC family. Conjugate transporter (TC 3.A.1.208) subfamily.

The protein localises to the cell membrane. Its function is as follows. ABC transporter; part of the gene cluster that mediates the biosynthesis of echinocandin B, a fungal lipidated cyclic hexapeptide that acts as an antifungal agent. This chain is ABC transporter ecdL, found in Aspergillus rugulosus (Emericella rugulosa).